The primary structure comprises 133 residues: Small ribosomal subunit protein uS11 (133 aa).

Residues 114–133 form a disordered region; it reads VTPIPHDGTRPPGGKRGRRV.

Belongs to the universal ribosomal protein uS11 family. As to quaternary structure, part of the 30S ribosomal subunit.

In terms of biological role, located on the platform of the 30S subunit. The sequence is that of Small ribosomal subunit protein uS11 from Archaeoglobus fulgidus (strain ATCC 49558 / DSM 4304 / JCM 9628 / NBRC 100126 / VC-16).